The following is a 229-amino-acid chain: 2,3-bisphosphoglycerate-dependent phosphoglycerate mutase 2 (229 aa).

Residues 12 to 19, 25 to 26, arginine 65, 92 to 95, lysine 103, and 119 to 120 contribute to the substrate site; these read RHGESVAN, TG, ERHY, and RR. Histidine 13 serves as the catalytic Tele-phosphohistidine intermediate. Glutamate 92 serves as the catalytic Proton donor/acceptor.

This sequence belongs to the phosphoglycerate mutase family. BPG-dependent PGAM subfamily.

It catalyses the reaction (2R)-2-phosphoglycerate = (2R)-3-phosphoglycerate. It functions in the pathway carbohydrate degradation; glycolysis; pyruvate from D-glyceraldehyde 3-phosphate: step 3/5. Catalyzes the interconversion of 2-phosphoglycerate and 3-phosphoglycerate. The polypeptide is 2,3-bisphosphoglycerate-dependent phosphoglycerate mutase 2 (Lactobacillus johnsonii (strain CNCM I-12250 / La1 / NCC 533)).